Consider the following 279-residue polypeptide: Prephenate dehydratase (279 aa).

Residues 2 to 178 (KIAYLGPRGS…NSTRFWLLGK (177 aa)) form the Prephenate dehydratase domain. One can recognise an ACT domain in the interval 194 to 270 (LALTLPDNLP…LGVKVRLLGN (77 aa)).

It carries out the reaction prephenate + H(+) = 3-phenylpyruvate + CO2 + H2O. It participates in amino-acid biosynthesis; L-phenylalanine biosynthesis; phenylpyruvate from prephenate: step 1/1. The protein is Prephenate dehydratase (pheA) of Lactococcus lactis subsp. lactis (strain IL1403) (Streptococcus lactis).